A 277-amino-acid polypeptide reads, in one-letter code: Tryptophan synthase alpha chain (277 aa).

Catalysis depends on proton acceptor residues E51 and E62.

This sequence belongs to the TrpA family. Tetramer of two alpha and two beta chains.

It catalyses the reaction (1S,2R)-1-C-(indol-3-yl)glycerol 3-phosphate + L-serine = D-glyceraldehyde 3-phosphate + L-tryptophan + H2O. It functions in the pathway amino-acid biosynthesis; L-tryptophan biosynthesis; L-tryptophan from chorismate: step 5/5. Its function is as follows. The alpha subunit is responsible for the aldol cleavage of indoleglycerol phosphate to indole and glyceraldehyde 3-phosphate. In Phenylobacterium zucineum (strain HLK1), this protein is Tryptophan synthase alpha chain.